The chain runs to 192 residues: Ion-translocating oxidoreductase complex subunit A (192 aa).

The next 6 helical transmembrane spans lie at 5 to 25, 39 to 59, 65 to 85, 102 to 122, 134 to 154, and 171 to 191; these read LLLL…FLGL, IGMS…SYLV, LPFD…AVVV, ALGI…VALL, AIYG…FSAM, and AIAM…TGLV.

Belongs to the NqrDE/RnfAE family. The complex is composed of six subunits: RnfA, RnfB, RnfC, RnfD, RnfE and RnfG.

The protein localises to the cell inner membrane. Its function is as follows. Part of a membrane-bound complex that couples electron transfer with translocation of ions across the membrane. The chain is Ion-translocating oxidoreductase complex subunit A from Shewanella sp. (strain MR-4).